Reading from the N-terminus, the 741-residue chain is Penicillin-binding protein 1B (741 aa).

Topologically, residues 1–12 (MYPVNLKLSIKF) are cytoplasmic. The helical; Signal-anchor for type II membrane protein transmembrane segment at 13–33 (LFYFFLYFLLIIIIYGVYLYF) threads the bilayer. At 34–741 (KINQVIHGKI…WIRNHNIFCT (708 aa)) the chain is on the extracellular side. The transglycosylase stretch occupies residues 139 to 311 (LRLDPQLIAM…SLYNPWNNPV (173 aa)). The active-site Proton donor; for transglycosylase activity is the glutamate 177. The segment at 395-687 (ENAIRHGIQQ…STGAMKIYHN (293 aa)) is transpeptidase. Serine 454 serves as the catalytic Acyl-ester intermediate; for transpeptidase activity.

In the N-terminal section; belongs to the glycosyltransferase 51 family. This sequence in the C-terminal section; belongs to the transpeptidase family.

It localises to the cell membrane. The catalysed reaction is [GlcNAc-(1-&gt;4)-Mur2Ac(oyl-L-Ala-gamma-D-Glu-L-Lys-D-Ala-D-Ala)](n)-di-trans,octa-cis-undecaprenyl diphosphate + beta-D-GlcNAc-(1-&gt;4)-Mur2Ac(oyl-L-Ala-gamma-D-Glu-L-Lys-D-Ala-D-Ala)-di-trans,octa-cis-undecaprenyl diphosphate = [GlcNAc-(1-&gt;4)-Mur2Ac(oyl-L-Ala-gamma-D-Glu-L-Lys-D-Ala-D-Ala)](n+1)-di-trans,octa-cis-undecaprenyl diphosphate + di-trans,octa-cis-undecaprenyl diphosphate + H(+). It catalyses the reaction Preferential cleavage: (Ac)2-L-Lys-D-Ala-|-D-Ala. Also transpeptidation of peptidyl-alanyl moieties that are N-acyl substituents of D-alanine.. It participates in cell wall biogenesis; peptidoglycan biosynthesis. In terms of biological role, cell wall formation. Synthesis of cross-linked peptidoglycan from the lipid intermediates. The enzyme has a penicillin-insensitive transglycosylase N-terminal domain (formation of linear glycan strands) and a penicillin-sensitive transpeptidase C-terminal domain (cross-linking of the peptide subunits). This is Penicillin-binding protein 1B (mrcB) from Buchnera aphidicola subsp. Baizongia pistaciae (strain Bp).